Here is a 2149-residue protein sequence, read N- to C-terminus: Serine/threonine-protein kinase WNK2 (2149 aa).

The span at 1 to 10 shows a compositional bias: basic and acidic residues; sequence MDGDGGRRDA. Disordered regions lie at residues 1-75 and 87-183; these read MDGD…QRRV and ERAR…EDDL. An omega-N-methylarginine mark is found at R19 and R30. Residue S45 is modified to Phosphoserine. The span at 95–114 shows a compositional bias: pro residues; it reads APAPAAPAAPPGSPSVPSDP. The segment covering 161–172 has biased composition (basic and acidic residues); the sequence is AKPEPGRARKDE. Positions 173 to 182 are enriched in acidic residues; it reads PEEEEDDEDD. Residues 195 to 453 form the Protein kinase domain; that stretch reads LKFDIELGRG…IKDLLSHAFF (259 aa). ATP is bound by residues S205, 275–278, and K325; that span reads TELM. D342 functions as the Proton acceptor in the catalytic mechanism. 2 positions are modified to phosphoserine; by autocatalysis: S352 and S356. S560 bears the Phosphoserine mark. 3 disordered regions span residues 578 to 630, 703 to 728, and 1067 to 1133; these read HAQS…DSQS, SMSF…APPV, and QEEQ…ERAS. A compositionally biased stretch (polar residues) spans 605–625; sequence ASVTSLASDSTFDSGQGSTVY. A compositionally biased stretch (pro residues) spans 709–728; it reads VLPPPSTPVPTGPSQPAPPV. Positions 1081-1092 are enriched in polar residues; it reads QSSESFGGSDVT. At S1098 the chain carries Phosphoserine. Positions 1115 to 1126 are enriched in basic residues; the sequence is ARKHHRRSTRAR. S1210 carries the post-translational modification Phosphoserine. Disordered regions lie at residues 1211 to 1234 and 1270 to 1502; these read EDTD…CGLA and PATD…GFVD. 2 stretches are compositionally biased toward low complexity: residues 1275–1292 and 1317–1353; these read SESS…EASQ and SQAG…STVP. The segment covering 1386–1400 has biased composition (polar residues); that stretch reads RSAQCTAQPLSTGQG. Positions 1470 to 1485 are enriched in pro residues; it reads LPSPPLGPTAPPPPPS. A phosphoserine mark is found at S1507, S1566, and S1594. 2 disordered regions span residues 1521-1727 and 1739-1778; these read VPTS…PSSP and ASSI…GGVA. Residues 1553–1567 show a composition bias toward polar residues; the sequence is SDKTPSLTQQTQPSL. Over residues 1587–1597 the composition is skewed to low complexity; sequence SSPMTAESSSS. The span at 1610–1629 shows a compositional bias: polar residues; sequence ASDSSTAPSVPQDASGSSVP. Residues S1725, S1726, S1770, and S1797 each carry the phosphoserine modification. Polar residues predominate over residues 1916 to 1928; the sequence is ASSTGHLSDSSRG. Positions 1916–1947 are disordered; that stretch reads ASSTGHLSDSSRGPPTKDPRGTKAVQTQQPCS. Residue S1962 is modified to Phosphoserine. Positions 2018 to 2031 are enriched in polar residues; sequence SSLYDSPGSSTSSL. Disordered stretches follow at residues 2018-2044 and 2122-2149; these read SSLY…PTLH and GPLS…EKPD. The span at 2122 to 2135 shows a compositional bias: low complexity; it reads GPLSTTATPGATPA.

The protein belongs to the protein kinase superfamily. Ser/Thr protein kinase family. WNK subfamily. Forms a complex with the phosphorylated form of STK39 in the brain. Mg(2+) serves as cofactor. Post-translationally, autophosphorylated. Autophosphorylation at Ser-352 and Ser-356 promotes its activity. In terms of tissue distribution, brain and heart.

It is found in the cytoplasm. Its subcellular location is the cell membrane. The enzyme catalyses L-seryl-[protein] + ATP = O-phospho-L-seryl-[protein] + ADP + H(+). The catalysed reaction is L-threonyl-[protein] + ATP = O-phospho-L-threonyl-[protein] + ADP + H(+). Its activity is regulated as follows. Activation requires autophosphorylation of Ser-356 and, to a lower extent, Ser-352. In terms of biological role, serine/threonine-protein kinase component of the WNK2-SPAK/OSR1 kinase cascade, which plays an important role in the regulation of electrolyte homeostasis, cell signaling, survival, and proliferation. The WNK2-SPAK/OSR1 kinase cascade is composed of WNK2, which mediates phosphorylation and activation of downstream kinases OXSR1/OSR1 and STK39/SPAK. Following activation, OXSR1/OSR1 and STK39/SPAK catalyze phosphorylation of ion cotransporters, regulating their activity. Acts as an activator and inhibitor of sodium-coupled chloride cotransporters and potassium-coupled chloride cotransporters respectively. Activates SLC12A2, SCNN1A, SCNN1B, SCNN1D and SGK1 and inhibits SLC12A5. Negatively regulates the EGF-induced activation of the ERK/MAPK-pathway and the downstream cell cycle progression. Affects MAPK3/MAPK1 activity by modulating the activity of MAP2K1 and this modulation depends on phosphorylation of MAP2K1 by PAK1. WNK2 acts by interfering with the activity of PAK1 by controlling the balance of the activity of upstream regulators of PAK1 activity, RHOA and RAC1, which display reciprocal activity. This Mus musculus (Mouse) protein is Serine/threonine-protein kinase WNK2.